A 133-amino-acid chain; its full sequence is Gamma-crystallin 1 (133 aa).

One can recognise a Beta/gamma crystallin 'Greek key' 2 domain in the interval 1–41 (WMLYEHPNYTGHQYFLRRGEYPDFQQWMGLNDSIRSCRVIP). Residues 42–46 (QHRGS) are connecting peptide. Beta/gamma crystallin 'Greek key' domains are found at residues 47–87 (FRLR…NVLE) and 88–130 (GHWI…RRVQ).

The protein belongs to the beta/gamma-crystallin family. In terms of assembly, monomer.

Crystallins are the dominant structural components of the vertebrate eye lens. The chain is Gamma-crystallin 1 from Rana temporaria (European common frog).